Reading from the N-terminus, the 355-residue chain is D-alanine--D-alanine ligase (355 aa).

One can recognise an ATP-grasp domain in the interval 143–350 (KTIFSNLKIP…IEQLVAKLVD (208 aa)). 178-233 (LKKLNFPFFVKPSNSGSSLGISKVINESEILQSLEKAQKIDSRILVEEGLEVREIE) serves as a coordination point for ATP. Mg(2+) is bound by residues aspartate 303, glutamate 317, and asparagine 319.

This sequence belongs to the D-alanine--D-alanine ligase family. Mg(2+) is required as a cofactor. The cofactor is Mn(2+).

The protein resides in the cytoplasm. The enzyme catalyses 2 D-alanine + ATP = D-alanyl-D-alanine + ADP + phosphate + H(+). The protein operates within cell wall biogenesis; peptidoglycan biosynthesis. Functionally, cell wall formation. This is D-alanine--D-alanine ligase from Prochlorococcus marinus (strain MIT 9215).